A 258-amino-acid polypeptide reads, in one-letter code: Acetylglutamate kinase (258 aa).

Substrate contacts are provided by residues 44–45, Arg66, and Asn158; that span reads GG. ATP contacts are provided by residues 181-186 and 209-211; these read DVSGIL and IIT.

The protein belongs to the acetylglutamate kinase family. ArgB subfamily. As to quaternary structure, homodimer.

It is found in the cytoplasm. The enzyme catalyses N-acetyl-L-glutamate + ATP = N-acetyl-L-glutamyl 5-phosphate + ADP. It functions in the pathway amino-acid biosynthesis; L-arginine biosynthesis; N(2)-acetyl-L-ornithine from L-glutamate: step 2/4. In terms of biological role, catalyzes the ATP-dependent phosphorylation of N-acetyl-L-glutamate. This Escherichia coli O6:K15:H31 (strain 536 / UPEC) protein is Acetylglutamate kinase.